The primary structure comprises 699 residues: Elongation factor G (699 aa).

Residues 8 to 283 (EHIRNIGICA…AVVDFLPSPI (276 aa)) enclose the tr-type G domain. Residues 17-24 (AHIDAGKT), 81-85 (DTPGH), and 135-138 (NKMD) each bind GTP.

It belongs to the TRAFAC class translation factor GTPase superfamily. Classic translation factor GTPase family. EF-G/EF-2 subfamily.

The protein localises to the cytoplasm. Catalyzes the GTP-dependent ribosomal translocation step during translation elongation. During this step, the ribosome changes from the pre-translocational (PRE) to the post-translocational (POST) state as the newly formed A-site-bound peptidyl-tRNA and P-site-bound deacylated tRNA move to the P and E sites, respectively. Catalyzes the coordinated movement of the two tRNA molecules, the mRNA and conformational changes in the ribosome. This Rickettsia peacockii (strain Rustic) protein is Elongation factor G.